The chain runs to 319 residues: 2-dehydropantoate 2-reductase (319 aa).

NADP(+) contacts are provided by residues 10 to 15 (GTGALG) and asparagine 105. Position 105 (asparagine 105) interacts with substrate. Lysine 192 acts as the Proton donor in catalysis. Residues asparagine 196, asparagine 200, and serine 262 each contribute to the substrate site. Glutamate 274 contacts NADP(+).

It belongs to the ketopantoate reductase family.

Its subcellular location is the cytoplasm. It catalyses the reaction (R)-pantoate + NADP(+) = 2-dehydropantoate + NADPH + H(+). Its pathway is cofactor biosynthesis; (R)-pantothenate biosynthesis; (R)-pantoate from 3-methyl-2-oxobutanoate: step 2/2. Catalyzes the NADPH-dependent reduction of ketopantoate into pantoic acid. This Nostoc sp. (strain PCC 7120 / SAG 25.82 / UTEX 2576) protein is 2-dehydropantoate 2-reductase.